The following is a 95-amino-acid chain: ESAT-6-like protein EsxA (95 aa).

This sequence belongs to the WXG100 family. ESAT-6 subfamily. As to quaternary structure, forms a tight 1:1 complex with EsxB. An artificial EsxA-EsxB heterodimer interacts with EspA.

Its subcellular location is the secreted. Its function is as follows. An exported protein. Unlike its M.tuberculosis counterpart has poor pore forming ability in artificial liposomes, does not undergo conformational change at acidic pH. Mutation of 2 residues to those found in M.tuberculosis (25-TA-26 to IH) alters the properties of this protein so that it inserts into liposomes at acidic pH, forming pores, like its M.tuberculosis counterpart. This Mycolicibacterium smegmatis (strain ATCC 700084 / mc(2)155) (Mycobacterium smegmatis) protein is ESAT-6-like protein EsxA.